Consider the following 610-residue polypeptide: MPNIEELKQRQEKIRNFSIIAHIDHGKSTLADRILEKTETVSSREMQAQLLDSMDLERERGITIKLNAIELNYKAKDGETYIFHLIDTPGHVDFTYEVSRSLAACEGAILVVDAAQGIEAQTLANVYLALDNDLEILPVINKIDLPAADPERVRTEIEDVIGLDASEAVLASAKAGIGIEEILEQIVEKVPAPQGDVEAPLQALIFDSVYDAYRGVILQVRVVNGMVKTGDKIQMMSNGKTFDVTEVGIFTPKAVGRDYLATGDVGYVAASIKTVADTRVGDTVTLADNPAAEPLHGYKQMNPMVFAGLYPIESNKYNDLREALEKLQLNDASLQFEPETSQALGFGFRCGFLGLLHMDVIQERLEREFNIDLIMTAPSVVYHVNTTDGEMLEVSNPSEFPDPTRIDTIEEPYVKAQIMVPQEYVGAVMELAQRKRGDFETMEYIDDNRVNVIYQIPLAEIVFDFFDKLKSSTRGYASFDYELSEYRRSQLVKMDILLNGDKVDALSFIVHREFAYERGKLIVDKLKKIIPRQQFEVPIQAAIGQKIVARTDIKALRKNVLAKCYGGDVSRKRKLLEKQKAGKKRMKAIGSVEVPQEAFLSVLSMDEDEK.

The region spanning 12-194 is the tr-type G domain; it reads EKIRNFSIIA…QIVEKVPAPQ (183 aa). Residues 24–29 and 141–144 contribute to the GTP site; these read DHGKST and NKID.

Belongs to the TRAFAC class translation factor GTPase superfamily. Classic translation factor GTPase family. LepA subfamily.

It is found in the cell membrane. It carries out the reaction GTP + H2O = GDP + phosphate + H(+). Required for accurate and efficient protein synthesis under certain stress conditions. May act as a fidelity factor of the translation reaction, by catalyzing a one-codon backward translocation of tRNAs on improperly translocated ribosomes. Back-translocation proceeds from a post-translocation (POST) complex to a pre-translocation (PRE) complex, thus giving elongation factor G a second chance to translocate the tRNAs correctly. Binds to ribosomes in a GTP-dependent manner. The protein is Elongation factor 4 of Streptococcus thermophilus (strain ATCC BAA-250 / LMG 18311).